Reading from the N-terminus, the 170-residue chain is Cathelicidin antimicrobial peptide (170 aa).

The signal sequence occupies residues 1–30 (MKTQRDGPSLGRWSLVLLLLGLTMPLAVIA). Positions 31 to 131 (RVLSYQEAVL…DISCDKDKRK (101 aa)) are cleaved as a propeptide — cathelin-like domain (CLD). Cystine bridges form between cysteine 86-cysteine 97 and cysteine 108-cysteine 125. The segment at 150–162 (LKNIGQRIKDFFG) is active core.

It belongs to the cathelicidin family. In terms of assembly, monomer, homodimer or homotrimer (in vitro). Oligomerizes as tetra- or hexamer in solution (in vitro). Post-translationally, proteolytically cleaved by proteinase PRTN3 into antibacterial peptide LL-37. Proteolytically cleaved by cathepsin CTSG and neutrophil elastase ELANE. In terms of processing, resistant to proteolytic degradation in solution, and when bound to both zwitterionic (mimicking mammalian membranes) and negatively charged membranes (mimicking bacterial membranes). After secretion onto the skin surface, the CAMP gene product is processed by a serine protease-dependent mechanism into multiple novel antimicrobial peptides distinct from and shorter than cathelicidin LL-37. These peptides show enhanced antimicrobial action, acquiring the ability to kill skin pathogens such as S.aureus, E.coli and C.albicans. These peptides have lost the ability to stimulate CXCL8/IL8 release from keratinocytes. The peptides act synergistically, killing bacteria at lower concentrations when present together, and maintain activity at increased salt condition.

It localises to the secreted. The protein localises to the vesicle. In terms of biological role, antimicrobial protein that is an integral component of the innate immune system. Binds to bacterial lipopolysaccharides (LPS). Acts via neutrophil N-formyl peptide receptors to enhance the release of CXCL2. Postsecretory processing generates multiple cathelicidin antimicrobial peptides with various lengths which act as a topical antimicrobial defense in sweat on skin. The unprocessed precursor form, cathelicidin antimicrobial peptide, inhibits the growth of Gram-negative E.coli and E.aerogenes with efficiencies comparable to that of the mature peptide LL-37 (in vitro). Antimicrobial peptide that is an integral component of the innate immune system. Binds to bacterial lipopolysaccharides (LPS). Causes membrane permeabilization by forming transmembrane pores (in vitro). Causes lysis of E.coli. Exhibits antimicrobial activity against Gram-negative bacteria such as P.aeruginosa, S.typhimurium, E.aerogenes, E.coli and P.syringae, Gram-positive bacteria such as L.monocytogenes, S.epidermidis, S.pyogenes and S.aureus, as well as vancomycin-resistant enterococci (in vitro). Exhibits antimicrobial activity against methicillin-resistant S.aureus, P.mirabilis, and C.albicans in low-salt media, but not in media containing 100 mM NaCl (in vitro). Forms chiral supramolecular assemblies with quinolone signal (PQS) molecules of P.aeruginosa, which may lead to interference of bacterial quorum signaling and perturbance of bacterial biofilm formation. May form supramolecular fiber-like assemblies on bacterial membranes. Induces cytokine and chemokine producation as well as TNF/TNFA and CSF2/GMCSF production in normal human keratinocytes. Exhibits hemolytic activity against red blood cells. Functionally, exhibits antimicrobial activity against E.coli and B.megaterium (in vitro). The sequence is that of Cathelicidin antimicrobial peptide from Ateles fusciceps robustus (Colombian black-faced spider monkey).